Reading from the N-terminus, the 469-residue chain is Cysteine protease ATG4 (469 aa).

Positions 48-99 are disordered; the sequence is KNIKADDHHPQTPPSVLKAETETQEAHDTAQPPNPPTNAPDTPPDSISSSFS. Residues 66–75 are compositionally biased toward basic and acidic residues; sequence AETETQEAHD. The span at 79 to 90 shows a compositional bias: pro residues; the sequence is PPNPPTNAPDTP. The Nucleophile role is filled by Cys172. Catalysis depends on residues Asp362 and His364. A disordered region spans residues 443-469; the sequence is GSSEGRESAIDEVETLSDDDTDTIHEA. Acidic residues predominate over residues 452 to 463; that stretch reads IDEVETLSDDDT.

Belongs to the peptidase C54 family. Interacts with ATG8.

Its subcellular location is the cytoplasm. It is found in the nucleus. It localises to the preautophagosomal structure. It carries out the reaction [protein]-C-terminal L-amino acid-glycyl-phosphatidylethanolamide + H2O = [protein]-C-terminal L-amino acid-glycine + a 1,2-diacyl-sn-glycero-3-phosphoethanolamine. Its function is as follows. Cysteine protease that plays a key role in cytoplasm to vacuole transport (Cvt) and autophagy by mediating both proteolytic activation and delipidation of ATG8. Required for selective autophagic degradation of the nucleus (nucleophagy) as well as for mitophagy which contributes to regulate mitochondrial quantity and quality by eliminating the mitochondria to a basal level to fulfill cellular energy requirements and preventing excess ROS production. The protease activity is required for proteolytic activation of ATG8: cleaves the C-terminal amino acid of ATG8 to reveal a C-terminal glycine. ATG8 ubiquitin-like activity requires the exposure of the glycine at the C-terminus for its conjugation to phosphatidylethanolamine (PE) and its insertion to membranes, which is necessary for autophagy. The ATG8-PE conjugate mediates tethering between adjacent membranes and stimulates membrane hemifusion, leading to expansion of the autophagosomal membrane during autophagy. In addition to the protease activity, also catalyzes deconjugation of PE-conjugated forms of ATG8 during macroautophagy: ATG8 delipidation is required to release the protein from membranes, which facilitates multiple events during macroautophagy, and especially for efficient autophagosome biogenesis, the assembly of ATG9-containing tubulovesicular clusters into phagophores/autophagosomes, and for the disassembly of PAS-associated ATG components. ATG8 delipidation by ATG4 also recycles ATG8-PE generated on inappropriate membranes to maintain a reservoir of unlipidated ATG8 that is required for autophagosome formation at the PAS. Autophagy is required for proper vegetative growth, asexual/sexual reproduction, and full virulence. Autophagy is particularly involved in the biosynthesis of deoxynivalenol (DON), an important virulence determinant. The chain is Cysteine protease ATG4 from Gibberella zeae (strain ATCC MYA-4620 / CBS 123657 / FGSC 9075 / NRRL 31084 / PH-1) (Wheat head blight fungus).